A 201-amino-acid chain; its full sequence is E3 ubiquitin-protein ligase LAP (201 aa).

The Cytoplasmic segment spans residues Met-1–Asn-92. The segment at Asp-9 to Lys-69 adopts an RING-CH-type zinc-finger fold. Zn(2+)-binding residues include Cys-17, Cys-20, Cys-31, Cys-33, His-41, Cys-44, Cys-59, and Cys-62. A helical membrane pass occupies residues Leu-93–Ile-113. Residues Lys-114–Glu-123 are Lumenal-facing. A helical transmembrane segment spans residues Leu-124–Ala-144. Topologically, residues Leu-145–Asn-201 are cytoplasmic. The segment at Gln-168 to Tyr-188 is disordered. Residues Glu-169–Tyr-188 show a composition bias toward acidic residues.

It belongs to the poxviridae LAP protein family.

The protein resides in the host membrane. Its subcellular location is the host Golgi apparatus. The protein localises to the host trans-Golgi network membrane. It localises to the host early endosome membrane. The catalysed reaction is S-ubiquitinyl-[E2 ubiquitin-conjugating enzyme]-L-cysteine + [acceptor protein]-L-lysine = [E2 ubiquitin-conjugating enzyme]-L-cysteine + N(6)-ubiquitinyl-[acceptor protein]-L-lysine.. In terms of biological role, E3 ubiquitin-protein ligase which promotes ubiquitination and subsequent degradation of host MHC-I and CD4 molecules, presumably to prevent lysis of infected cells by cytotoxic T-lymphocytes and NK cell. Binds target molecules through transmembrane interaction. The result of this ubiquitination is the enhancement of the endocytosis of the target chain and the delivery to the lysosome, where it is proteolytically destroyed. This chain is E3 ubiquitin-protein ligase LAP, found in Oryctolagus cuniculus (Rabbit).